We begin with the raw amino-acid sequence, 435 residues long: Nuclear hormone receptor family member nhr-136 (435 aa).

The nuclear receptor DNA-binding region spans 50–129 (PSNCKVCRHS…AGMNPSAIQA (80 aa)). 2 consecutive NR C4-type zinc fingers follow at residues 53–73 (CKVCRHSATGYHYDVPSCNGC) and 89–112 (CLKMRKCLSGTEPVDLSRRMCRAC). The region spanning 194–430 (RDIRKLDELI…RYTRISNLYE (237 aa)) is the NR LBD domain.

Belongs to the nuclear hormone receptor family.

The protein localises to the nucleus. Orphan nuclear receptor. The chain is Nuclear hormone receptor family member nhr-136 (nhr-136) from Caenorhabditis elegans.